Reading from the N-terminus, the 273-residue chain is Thiazole synthase (273 aa).

Lys-113 (schiff-base intermediate with DXP) is an active-site residue. Residues Gly-174, 201–202 (AG), and 223–224 (NT) contribute to the 1-deoxy-D-xylulose 5-phosphate site.

Belongs to the ThiG family. In terms of assembly, homotetramer. Forms heterodimers with either ThiH or ThiS.

The protein localises to the cytoplasm. It carries out the reaction [ThiS sulfur-carrier protein]-C-terminal-Gly-aminoethanethioate + 2-iminoacetate + 1-deoxy-D-xylulose 5-phosphate = [ThiS sulfur-carrier protein]-C-terminal Gly-Gly + 2-[(2R,5Z)-2-carboxy-4-methylthiazol-5(2H)-ylidene]ethyl phosphate + 2 H2O + H(+). The protein operates within cofactor biosynthesis; thiamine diphosphate biosynthesis. Catalyzes the rearrangement of 1-deoxy-D-xylulose 5-phosphate (DXP) to produce the thiazole phosphate moiety of thiamine. Sulfur is provided by the thiocarboxylate moiety of the carrier protein ThiS. In vitro, sulfur can be provided by H(2)S. The polypeptide is Thiazole synthase (Salinibacter ruber (strain DSM 13855 / M31)).